The sequence spans 204 residues: Calexcitin-1 (204 aa).

3 EF-hand domains span residues 25-61 (FLVK…VRDI), 75-110 (SLAA…TDAK), and 115-150 (WFKD…YGFD). Positions 39, 41, 43, 45, 50, 88, 90, 92, 99, 128, 130, 132, and 139 each coordinate Ca(2+).

This chain is Calexcitin-1 (cex-1), found in Caenorhabditis elegans.